We begin with the raw amino-acid sequence, 435 residues long: MSQKPHLNLIVIGHVDHGKSTLVGRLLMDRGFLDEKTIKEAEEAAKKLGKESEKYAFLLDRLKEERERGVTINLTFMRFETKKYFFTIIDAPGHRDFVKNMITGASQADAAILAVSARKGEFESGMSLEGQTREHIILAKTMGLNQVIVAITKMDVAEPPYDQKRYNEIKETIEKFMKSFGFDMSKVKFIPIVSITGENVTKRSENMKWYNGPTLEEALDMLEIPPKPVDKPLRLPIQEVYSISGVGTVPVGRVESGVMKVGDKIVFMPAGKSAEVRSIETHHTKLEKAEPGDNIGFNVRGIDKKDVKRGDVVGHTTNPPTVAEEFTARVIVVWHPTALAVGYTPVVHVHTASIACRVSEIVARLDPKTGKEAEKNPQFIKQGESAIVKFKPIKPLCVEKFSDFPPLGRFAMRDMGKTVGVGVINDVKPSKIEIK.

The 226-residue stretch at 4–229 (KPHLNLIVIG…DMLEIPPKPV (226 aa)) folds into the tr-type G domain. The G1 stretch occupies residues 13-20 (GHVDHGKS). Residue 13-20 (GHVDHGKS) participates in GTP binding. S20 serves as a coordination point for Mg(2+). The segment at 69–73 (GVTIN) is G2. Residues 90–93 (DAPG) are G3. GTP contacts are provided by residues 90–94 (DAPGH) and 152–155 (TKMD). The segment at 152 to 155 (TKMD) is G4. Positions 193-195 (VSI) are G5.

It belongs to the TRAFAC class translation factor GTPase superfamily. Classic translation factor GTPase family. EF-Tu/EF-1A subfamily.

The protein localises to the cytoplasm. The enzyme catalyses GTP + H2O = GDP + phosphate + H(+). In terms of biological role, GTP hydrolase that promotes the GTP-dependent binding of aminoacyl-tRNA to the A-site of ribosomes during protein biosynthesis. The chain is Elongation factor 1-alpha from Metallosphaera sedula (strain ATCC 51363 / DSM 5348 / JCM 9185 / NBRC 15509 / TH2).